Here is a 391-residue protein sequence, read N- to C-terminus: Probable FAD-dependent oxidoreductase PA4991 (391 aa).

FAD is bound by residues Ala-17, Glu-36, 44-45 (QS), 49-51 (QGI), and 346-347 (LA).

It belongs to the DAO family. In terms of assembly, monomer. FAD serves as cofactor.

In terms of biological role, probably functions as a FAD-dependent oxidoreductase, whose physiological substrate is unknown. Does not display amino-acid oxidase or glycerol-3-phosphate dehydrogenase activities. Is essential for growth of P.aeruginosa in the sputum of cystic fibrosis patients. The polypeptide is Probable FAD-dependent oxidoreductase PA4991 (Pseudomonas aeruginosa (strain ATCC 15692 / DSM 22644 / CIP 104116 / JCM 14847 / LMG 12228 / 1C / PRS 101 / PAO1)).